Reading from the N-terminus, the 442-residue chain is 5'-deoxyadenosine deaminase (442 aa).

Positions 72 and 74 each coordinate Zn(2+). 2 residues coordinate substrate: glutamate 101 and histidine 193. Residue histidine 220 participates in Zn(2+) binding. 2 residues coordinate substrate: glutamate 223 and aspartate 309. Aspartate 309 provides a ligand contact to Zn(2+).

Belongs to the metallo-dependent hydrolases superfamily. MTA/SAH deaminase family. As to quaternary structure, homotetramer. Zn(2+) is required as a cofactor.

It carries out the reaction 5'-deoxyadenosine + H2O + H(+) = 5'-deoxyinosine + NH4(+). It catalyses the reaction S-adenosyl-L-homocysteine + H2O + H(+) = S-inosyl-L-homocysteine + NH4(+). The enzyme catalyses S-methyl-5'-thioadenosine + H2O + H(+) = S-methyl-5'-thioinosine + NH4(+). The catalysed reaction is adenosine + H2O + H(+) = inosine + NH4(+). The protein operates within amino-acid biosynthesis; S-adenosyl-L-methionine biosynthesis. Functionally, catalyzes the deamination of three SAM-derived enzymatic products, namely 5'-deoxyadenosine, S-adenosyl-L-homocysteine, and 5'-methylthioadenosine, to produce the inosine analogs. Can also deaminate adenosine. The preferred substrate for this enzyme is 5'-deoxyadenosine, but all these substrates are efficiently deaminated. Likely functions in a S-adenosyl-L-methionine (SAM) recycling pathway from S-adenosyl-L-homocysteine (SAH) produced from SAM-dependent methylation reactions. May also be involved in the recycling of 5'-deoxyadenosine, whereupon the 5'-deoxyribose moiety of 5'-deoxyinosine is further metabolized to deoxyhexoses used for the biosynthesis of aromatic amino acids in methanogens. The chain is 5'-deoxyadenosine deaminase from Methanoregula boonei (strain DSM 21154 / JCM 14090 / 6A8).